Here is a 679-residue protein sequence, read N- to C-terminus: DNA ligase (679 aa).

Residues 41 to 45, 90 to 91, and E120 each bind NAD(+); these read DSVYD and SL. K122 serves as the catalytic N6-AMP-lysine intermediate. Residues R143, E177, K293, and K317 each coordinate NAD(+). Zn(2+) contacts are provided by C411, C414, C429, and C434. Residues 597-679 enclose the BRCT domain; that stretch reads DSNSWFAGKR…SETMREDAQA (83 aa).

It belongs to the NAD-dependent DNA ligase family. LigA subfamily. Requires Mg(2+) as cofactor. It depends on Mn(2+) as a cofactor.

It carries out the reaction NAD(+) + (deoxyribonucleotide)n-3'-hydroxyl + 5'-phospho-(deoxyribonucleotide)m = (deoxyribonucleotide)n+m + AMP + beta-nicotinamide D-nucleotide.. In terms of biological role, DNA ligase that catalyzes the formation of phosphodiester linkages between 5'-phosphoryl and 3'-hydroxyl groups in double-stranded DNA using NAD as a coenzyme and as the energy source for the reaction. It is essential for DNA replication and repair of damaged DNA. In Lactiplantibacillus plantarum (strain ATCC BAA-793 / NCIMB 8826 / WCFS1) (Lactobacillus plantarum), this protein is DNA ligase.